A 396-amino-acid polypeptide reads, in one-letter code: Tryptophan synthase beta chain (396 aa).

Lys86 carries the post-translational modification N6-(pyridoxal phosphate)lysine.

It belongs to the TrpB family. In terms of assembly, tetramer of two alpha and two beta chains. Pyridoxal 5'-phosphate is required as a cofactor.

It catalyses the reaction (1S,2R)-1-C-(indol-3-yl)glycerol 3-phosphate + L-serine = D-glyceraldehyde 3-phosphate + L-tryptophan + H2O. Its pathway is amino-acid biosynthesis; L-tryptophan biosynthesis; L-tryptophan from chorismate: step 5/5. The beta subunit is responsible for the synthesis of L-tryptophan from indole and L-serine. In Francisella tularensis subsp. novicida (strain U112), this protein is Tryptophan synthase beta chain.